Here is a 207-residue protein sequence, read N- to C-terminus: Guanylate kinase (207 aa).

The 181-residue stretch at 4–184 folds into the Guanylate kinase-like domain; that stretch reads GILFIISAPS…AVNDLITIIT (181 aa). 11–18 lines the ATP pocket; it reads APSGTGKS.

This sequence belongs to the guanylate kinase family.

The protein localises to the cytoplasm. The enzyme catalyses GMP + ATP = GDP + ADP. In terms of biological role, essential for recycling GMP and indirectly, cGMP. The protein is Guanylate kinase (gmk) of Buchnera aphidicola subsp. Acyrthosiphon pisum (strain APS) (Acyrthosiphon pisum symbiotic bacterium).